Here is a 367-residue protein sequence, read N- to C-terminus: 3-isopropylmalate dehydrogenase (367 aa).

Gly-77–Glu-90 contacts NAD(+). Residues Arg-97, Arg-107, Arg-135, and Asp-224 each contribute to the substrate site. Residues Asp-224, Asp-248, and Asp-252 each contribute to the Mg(2+) site. Gly-287–Asn-299 serves as a coordination point for NAD(+).

The protein belongs to the isocitrate and isopropylmalate dehydrogenases family. LeuB type 1 subfamily. Homodimer. It depends on Mg(2+) as a cofactor. Mn(2+) is required as a cofactor.

It localises to the cytoplasm. It carries out the reaction (2R,3S)-3-isopropylmalate + NAD(+) = 4-methyl-2-oxopentanoate + CO2 + NADH. The protein operates within amino-acid biosynthesis; L-leucine biosynthesis; L-leucine from 3-methyl-2-oxobutanoate: step 3/4. Its function is as follows. Catalyzes the oxidation of 3-carboxy-2-hydroxy-4-methylpentanoate (3-isopropylmalate) to 3-carboxy-4-methyl-2-oxopentanoate. The product decarboxylates to 4-methyl-2 oxopentanoate. This chain is 3-isopropylmalate dehydrogenase, found in Ruegeria pomeroyi (strain ATCC 700808 / DSM 15171 / DSS-3) (Silicibacter pomeroyi).